Consider the following 442-residue polypeptide: tRNA modification GTPase MnmE (442 aa).

Arg-22, Glu-79, and Lys-119 together coordinate (6S)-5-formyl-5,6,7,8-tetrahydrofolate. Positions 216 to 366 (GIKTCLVGAP…LLEKIKSIFA (151 aa)) constitute a TrmE-type G domain. Asn-226 lines the K(+) pocket. GTP contacts are provided by residues 226-231 (NSGKSS), 245-251 (SEIPGTT), and 270-273 (DTAG). Residue Ser-230 participates in Mg(2+) binding. K(+)-binding residues include Ser-245, Ile-247, and Thr-250. Thr-251 serves as a coordination point for Mg(2+). Lys-442 lines the (6S)-5-formyl-5,6,7,8-tetrahydrofolate pocket.

The protein belongs to the TRAFAC class TrmE-Era-EngA-EngB-Septin-like GTPase superfamily. TrmE GTPase family. In terms of assembly, homodimer. Heterotetramer of two MnmE and two MnmG subunits. K(+) serves as cofactor.

The protein resides in the cytoplasm. Exhibits a very high intrinsic GTPase hydrolysis rate. Involved in the addition of a carboxymethylaminomethyl (cmnm) group at the wobble position (U34) of certain tRNAs, forming tRNA-cmnm(5)s(2)U34. In Mesomycoplasma hyopneumoniae (strain 232) (Mycoplasma hyopneumoniae), this protein is tRNA modification GTPase MnmE.